Consider the following 262-residue polypeptide: Phosphonates import ATP-binding protein PhnC (262 aa).

The 249-residue stretch at 5-253 folds into the ABC transporter domain; sequence IRVEKLAKTF…RFDHLYRSIN (249 aa). 37 to 44 is an ATP binding site; the sequence is GPSGSGKS.

It belongs to the ABC transporter superfamily. Phosphonates importer (TC 3.A.1.9.1) family. As to quaternary structure, the complex is composed of two ATP-binding proteins (PhnC), two transmembrane proteins (PhnE) and a solute-binding protein (PhnD).

The protein localises to the cell inner membrane. It carries out the reaction phosphonate(out) + ATP + H2O = phosphonate(in) + ADP + phosphate + H(+). Functionally, part of the ABC transporter complex PhnCDE involved in phosphonates import. Responsible for energy coupling to the transport system. This chain is Phosphonates import ATP-binding protein PhnC, found in Escherichia coli O6:K15:H31 (strain 536 / UPEC).